A 124-amino-acid polypeptide reads, in one-letter code: Small ribosomal subunit protein uS13 (124 aa).

The disordered stretch occupies residues 91 to 124; sequence HRKGLPVNGQNTRNNARTRKGKPKAVTGKKQAGK.

Belongs to the universal ribosomal protein uS13 family. In terms of assembly, part of the 30S ribosomal subunit. Forms a loose heterodimer with protein S19. Forms two bridges to the 50S subunit in the 70S ribosome.

Functionally, located at the top of the head of the 30S subunit, it contacts several helices of the 16S rRNA. In the 70S ribosome it contacts the 23S rRNA (bridge B1a) and protein L5 of the 50S subunit (bridge B1b), connecting the 2 subunits; these bridges are implicated in subunit movement. Contacts the tRNAs in the A and P-sites. The protein is Small ribosomal subunit protein uS13 of Acholeplasma laidlawii (strain PG-8A).